The sequence spans 243 residues: Ribonuclease PH (243 aa).

Residues arginine 84 and 122 to 124 each bind phosphate; that span reads GTR.

It belongs to the RNase PH family. Homohexameric ring arranged as a trimer of dimers.

It carries out the reaction tRNA(n+1) + phosphate = tRNA(n) + a ribonucleoside 5'-diphosphate. Its function is as follows. Phosphorolytic 3'-5' exoribonuclease that plays an important role in tRNA 3'-end maturation. Removes nucleotide residues following the 3'-CCA terminus of tRNAs; can also add nucleotides to the ends of RNA molecules by using nucleoside diphosphates as substrates, but this may not be physiologically important. Probably plays a role in initiation of 16S rRNA degradation (leading to ribosome degradation) during starvation. This chain is Ribonuclease PH, found in Bdellovibrio bacteriovorus (strain ATCC 15356 / DSM 50701 / NCIMB 9529 / HD100).